The chain runs to 422 residues: Autophagy-related protein 21 (422 aa).

WD repeat units lie at residues 1–35 (MGLS…KCFE), 102–153 (SFPH…ITGQ), 166–206 (MTSL…SKSV), 228–268 (VHKG…ESEL), 280–319 (NRPC…RLLS), and 374–414 (KNTK…GSCV). Residues 276–280 (FRRGN) carry the L/FRRG motif motif.

Belongs to the WD repeat PROPPIN family.

The protein resides in the cytoplasm. The protein localises to the membrane. It localises to the vacuole membrane. In terms of biological role, required for cytoplasm to vacuole transport (Cvt) vesicles formation and mitophagy. Involved in binding of phosphatidylethanolamine to ATG8 and in recruitment of ATG8 and ATG5 to the pre-autophagosomal structure. Protects ATG8 from ARG4-mediated cleavage. The sequence is that of Autophagy-related protein 21 (ATG21) from Vanderwaltozyma polyspora (strain ATCC 22028 / DSM 70294 / BCRC 21397 / CBS 2163 / NBRC 10782 / NRRL Y-8283 / UCD 57-17) (Kluyveromyces polysporus).